The chain runs to 215 residues: Phosphatidylserine decarboxylase proenzyme (215 aa).

The active-site Schiff-base intermediate with substrate; via pyruvic acid is serine 181. Serine 181 carries the pyruvic acid (Ser); by autocatalysis modification.

The protein belongs to the phosphatidylserine decarboxylase family. PSD-A subfamily. In terms of assembly, heterodimer of a large membrane-associated beta subunit and a small pyruvoyl-containing alpha subunit. Requires pyruvate as cofactor. Is synthesized initially as an inactive proenzyme. Formation of the active enzyme involves a self-maturation process in which the active site pyruvoyl group is generated from an internal serine residue via an autocatalytic post-translational modification. Two non-identical subunits are generated from the proenzyme in this reaction, and the pyruvate is formed at the N-terminus of the alpha chain, which is derived from the carboxyl end of the proenzyme. The post-translation cleavage follows an unusual pathway, termed non-hydrolytic serinolysis, in which the side chain hydroxyl group of the serine supplies its oxygen atom to form the C-terminus of the beta chain, while the remainder of the serine residue undergoes an oxidative deamination to produce ammonia and the pyruvoyl prosthetic group on the alpha chain.

It is found in the cell membrane. It catalyses the reaction a 1,2-diacyl-sn-glycero-3-phospho-L-serine + H(+) = a 1,2-diacyl-sn-glycero-3-phosphoethanolamine + CO2. The protein operates within phospholipid metabolism; phosphatidylethanolamine biosynthesis; phosphatidylethanolamine from CDP-diacylglycerol: step 2/2. Its function is as follows. Catalyzes the formation of phosphatidylethanolamine (PtdEtn) from phosphatidylserine (PtdSer). In Polynucleobacter asymbioticus (strain DSM 18221 / CIP 109841 / QLW-P1DMWA-1) (Polynucleobacter necessarius subsp. asymbioticus), this protein is Phosphatidylserine decarboxylase proenzyme.